The following is a 236-amino-acid chain: Biosynthetic peptidoglycan transglycosylase (236 aa).

The chain crosses the membrane as a helical span at residues 12-31 (ALFWFAAGSIVLVLVFRWVP).

This sequence belongs to the glycosyltransferase 51 family.

It localises to the cell inner membrane. It catalyses the reaction [GlcNAc-(1-&gt;4)-Mur2Ac(oyl-L-Ala-gamma-D-Glu-L-Lys-D-Ala-D-Ala)](n)-di-trans,octa-cis-undecaprenyl diphosphate + beta-D-GlcNAc-(1-&gt;4)-Mur2Ac(oyl-L-Ala-gamma-D-Glu-L-Lys-D-Ala-D-Ala)-di-trans,octa-cis-undecaprenyl diphosphate = [GlcNAc-(1-&gt;4)-Mur2Ac(oyl-L-Ala-gamma-D-Glu-L-Lys-D-Ala-D-Ala)](n+1)-di-trans,octa-cis-undecaprenyl diphosphate + di-trans,octa-cis-undecaprenyl diphosphate + H(+). It participates in cell wall biogenesis; peptidoglycan biosynthesis. Its function is as follows. Peptidoglycan polymerase that catalyzes glycan chain elongation from lipid-linked precursors. The sequence is that of Biosynthetic peptidoglycan transglycosylase from Pseudomonas putida (strain W619).